Here is a 361-residue protein sequence, read N- to C-terminus: Peptide chain release factor 1 (361 aa).

Residue Q235 is modified to N5-methylglutamine.

This sequence belongs to the prokaryotic/mitochondrial release factor family. In terms of processing, methylated by PrmC. Methylation increases the termination efficiency of RF1.

The protein localises to the cytoplasm. Peptide chain release factor 1 directs the termination of translation in response to the peptide chain termination codons UAG and UAA. In Xanthomonas campestris pv. campestris (strain 8004), this protein is Peptide chain release factor 1.